The chain runs to 228 residues: Endonuclease V (228 aa).

Residues aspartate 36 and aspartate 104 each coordinate Mg(2+).

The protein belongs to the endonuclease V family. Mg(2+) serves as cofactor.

Its subcellular location is the cytoplasm. The catalysed reaction is Endonucleolytic cleavage at apurinic or apyrimidinic sites to products with a 5'-phosphate.. In terms of biological role, DNA repair enzyme involved in the repair of deaminated bases. Selectively cleaves double-stranded DNA at the second phosphodiester bond 3' to a deoxyinosine leaving behind the intact lesion on the nicked DNA. In Serratia proteamaculans (strain 568), this protein is Endonuclease V.